The following is a 287-amino-acid chain: 4-hydroxybenzoate octaprenyltransferase (287 aa).

A run of 5 helical transmembrane segments spans residues 20 to 38 (IGTLLLMWPCLMALWFAAG), 95 to 115 (IVFLVMALFAFCLVLLLNPLV), 211 to 231 (IIAAFQFAALACFIIAGLIAE), 235 to 255 (IYGGGILAFIGFALYQQKLIF), and 266 to 286 (FLNNNWAGMALFIALGLDYLV).

This sequence belongs to the UbiA prenyltransferase family. Requires Mg(2+) as cofactor.

Its subcellular location is the cell inner membrane. It carries out the reaction all-trans-octaprenyl diphosphate + 4-hydroxybenzoate = 4-hydroxy-3-(all-trans-octaprenyl)benzoate + diphosphate. It participates in cofactor biosynthesis; ubiquinone biosynthesis. Functionally, catalyzes the prenylation of para-hydroxybenzoate (PHB) with an all-trans polyprenyl group. Mediates the second step in the final reaction sequence of ubiquinone-8 (UQ-8) biosynthesis, which is the condensation of the polyisoprenoid side chain with PHB, generating the first membrane-bound Q intermediate 3-octaprenyl-4-hydroxybenzoate. This is 4-hydroxybenzoate octaprenyltransferase from Shewanella piezotolerans (strain WP3 / JCM 13877).